Consider the following 245-residue polypeptide: Probable transcriptional regulatory protein pc1328 (245 aa).

The protein belongs to the TACO1 family.

It is found in the cytoplasm. In Protochlamydia amoebophila (strain UWE25), this protein is Probable transcriptional regulatory protein pc1328.